Here is a 236-residue protein sequence, read N- to C-terminus: Small ribosomal subunit protein uS2c (236 aa).

Belongs to the universal ribosomal protein uS2 family.

The protein resides in the plastid. It is found in the chloroplast. This is Small ribosomal subunit protein uS2c (rps2) from Panax ginseng (Korean ginseng).